Here is a 261-residue protein sequence, read N- to C-terminus: NAD kinase (261 aa).

The active-site Proton acceptor is aspartate 54. NAD(+) is bound by residues 54 to 55, 123 to 124, arginine 150, aspartate 152, and 163 to 168; these read DG, ND, and TAYSLS.

It belongs to the NAD kinase family. A divalent metal cation is required as a cofactor.

The protein resides in the cytoplasm. It catalyses the reaction NAD(+) + ATP = ADP + NADP(+) + H(+). Involved in the regulation of the intracellular balance of NAD and NADP, and is a key enzyme in the biosynthesis of NADP. Catalyzes specifically the phosphorylation on 2'-hydroxyl of the adenosine moiety of NAD to yield NADP. In Caldicellulosiruptor bescii (strain ATCC BAA-1888 / DSM 6725 / KCTC 15123 / Z-1320) (Anaerocellum thermophilum), this protein is NAD kinase.